We begin with the raw amino-acid sequence, 362 residues long: Sphingolipid delta(4)-desaturase (362 aa).

Low complexity predominate over residues 1-10 (MAESTATTTA). Positions 1 to 20 (MAESTATTTAVPPPAEESWN) are disordered. The next 3 helical transmembrane spans lie at 60–80 (PLTK…AYLL), 90–110 (FFLT…LAIH), and 121–143 (TLYN…AASF). The Histidine box-1 motif lies at 110-114 (HELSH). The Histidine box-2 signature appears at 147–151 (HMEHH). Transmembrane regions (helical) follow at residues 169–189 (LILF…LLFY), 200–220 (PFTL…YLVV), and 228–248 (LAYF…AGHF). A Histidine box-3 motif is present at residues 290-294 (HIEHH).

This sequence belongs to the fatty acid desaturase type 1 family. DEGS subfamily.

The protein resides in the membrane. The catalysed reaction is an N-acylsphinganine + 2 Fe(II)-[cytochrome b5] + O2 + 2 H(+) = an N-acylsphing-4-enine + 2 Fe(III)-[cytochrome b5] + 2 H2O. Its pathway is lipid metabolism; sphingolipid metabolism. Functionally, delta(4)-fatty-acid desaturase which introduces a double bond at the 4-position in the long-chain base (LCB) of ceramides. Required for sphingosine biosynthesis. The polypeptide is Sphingolipid delta(4)-desaturase (dsd1) (Schizosaccharomyces pombe (strain 972 / ATCC 24843) (Fission yeast)).